Reading from the N-terminus, the 532-residue chain is NMDA receptor synaptonuclear signaling and neuronal migration factor (532 aa).

The N-myristoyl glycine moiety is linked to residue Gly-2. A necessary and sufficient to elicit dendritic processes and synaptic contacts region spans residues 2 to 235 (GAAASRRRAL…FSFQTATTTM (234 aa)). 2 disordered regions span residues 34–67 (SQSH…APQN) and 127–174 (RRQR…GCAQ). A compositionally biased stretch (basic and acidic residues) spans 38-48 (PENRNGADHLL). The span at 127-139 (RRQRERHPHHHSQ) shows a compositional bias: basic residues. Residues 155–164 (PCQSWAGSRQ) show a composition bias toward polar residues. Ser-206 carries the phosphoserine modification. Positions 249–252 (RRKR) match the Nuclear localization signal motif. Residues 275–315 (RVKAQTFAERRERSFSRSWSDPTPMKADTSHDSRDSSDLQS) are disordered. Ser-292 and Ser-294 each carry phosphoserine. Basic and acidic residues predominate over residues 302–311 (DTSHDSRDSS).

The protein belongs to the NSMF family. In terms of assembly, interacts with KPNA1; the interaction occurs in a calcium-independent manner after synaptic NMDA receptor stimulation and is required for nuclear import of NSMF but is competed by CABP1. Interacts (via the central NLS-containing motif region) with CABP1 (via EF-hands 1 and 2); the interaction occurs in a calcium-dependent manner after synaptic NMDA receptor stimulation and prevents the nuclear import of NSMF. Cannot be competed by calmodulin. Post-translationally, proteolytically processed after NMDA receptor activation. Cleaved in a calcium-dependent and calpain-sensitive manner. Calpain cleavage is essential for the translocation process from dendrites to the nucleus. Preferentially expressed in immature migratory, in comparison to postmigrating, gonadotropin-releasing hormone (GnRH) neuronal cell lines (at protein level). Expressed in adult brain and liver. In the brain, expressed in the primary pituitary gland, cortex, hippocampus, olfactory bulb and thalamus.

It is found in the nucleus. It localises to the nucleus envelope. Its subcellular location is the nucleus membrane. The protein localises to the nucleus matrix. The protein resides in the cytoplasm. It is found in the cell cortex. It localises to the cytoskeleton. Its subcellular location is the cell membrane. The protein localises to the cell projection. The protein resides in the dendrite. It is found in the synapse. It localises to the synaptosome. Its subcellular location is the postsynaptic density. The protein localises to the membrane. Its function is as follows. Couples NMDA-sensitive glutamate receptor signaling to the nucleus and triggers long-lasting changes in the cytoarchitecture of dendrites and spine synapse processes. Part of the cAMP response element-binding protein (CREB) shut-off signaling pathway. Stimulates outgrowth of olfactory axons and migration of gonadotropin-releasing hormone (GnRH) and luteinizing-hormone-releasing hormone (LHRH) neuronal cells. The chain is NMDA receptor synaptonuclear signaling and neuronal migration factor (Nsmf) from Mus musculus (Mouse).